Consider the following 318-residue polypeptide: Probable cell division protein WhiA (318 aa).

The segment at residues 276–310 (TLQELGEMVESGSISKSGINHRLRKIDQIADKIRN) is a DNA-binding region (H-T-H motif).

Belongs to the WhiA family.

Involved in cell division and chromosome segregation. This is Probable cell division protein WhiA from Exiguobacterium sibiricum (strain DSM 17290 / CCUG 55495 / CIP 109462 / JCM 13490 / 255-15).